Reading from the N-terminus, the 732-residue chain is E3 ubiquitin-protein ligase TRIM56 (732 aa).

The segment at 21–60 adopts an RING-type zinc-finger fold; the sequence is CKICLEQLRVPKTLPCLHTYCQDCLAQLAEGSRLRCPECR. The segment at 164–205 adopts a B box-type zinc-finger fold; that stretch reads RQAAQCPQHPGEALRFLCQPCSQLLCRECRLDPHLDHPCLPL. C169, H172, C192, and H197 together coordinate Zn(2+). The stretch at 211–286 forms a coiled coil; it reads ARRPGLEELL…LRAHVEAAEE (76 aa). Basic and acidic residues predominate over residues 374–384; the sequence is LPQKDSGKDGA. The segment at 374-462 is disordered; that stretch reads LPQKDSGKDG…PAPGPNLEGS (89 aa). A compositionally biased stretch (polar residues) spans 389-405; that stretch reads GDATQPQSRDGVQTPNQ. Residue T402 is modified to Phosphothreonine. Residues 407-416 are compositionally biased toward basic and acidic residues; the sequence is DGAKTPKESR. At T419 the chain carries Phosphothreonine. The span at 434–446 shows a compositional bias: basic residues; that stretch reads SNKKRKFKGRLKS. S452 carries the phosphoserine modification.

This sequence belongs to the TRIM/RBCC family. Interacts with STING1. Interacts with TICAM1.

It localises to the cytoplasm. It carries out the reaction S-ubiquitinyl-[E2 ubiquitin-conjugating enzyme]-L-cysteine + [acceptor protein]-L-lysine = [E2 ubiquitin-conjugating enzyme]-L-cysteine + N(6)-ubiquitinyl-[acceptor protein]-L-lysine.. Its pathway is protein modification; protein ubiquitination. Functionally, E3 ubiquitin-protein ligase that plays a key role in innate antiviral immunity by mediating ubiquitination of CGAS and STING1. In response to pathogen- and host-derived double-stranded DNA (dsDNA), targets STING1 to 'Lys-63'-linked ubiquitination, thereby promoting its homodimerization, a step required for the production of type I interferon IFN-beta. Also mediate monoubiquitination of CGAS, thereby promoting CGAS oligomerization and subsequent activation. Independently of its E3 ubiquitin ligase activity, positive regulator of TLR3 signaling. Potentiates extracellular double stranded RNA (dsRNA)-induced expression of IFNB1 and interferon-stimulated genes ISG15, IFIT1/ISG56, CXCL10, OASL and CCL5/RANTES. Restricts bovine viral diarrhea virus (BVDV) replication. This is E3 ubiquitin-protein ligase TRIM56 from Bos taurus (Bovine).